The following is a 131-amino-acid chain: MGELFLLRNIKVAGSMSEQERDEVLEDDDDDEDNKSSQQERDEFVEDDDNNSIQSSPSCAQPLLTQYHDDGSTPLLIPERLQFPTSQNLTPRLIPERLQYPTSQNLTSIKRKTTRLRFGFGEISRVKKTIN.

The disordered stretch occupies residues 16-71; that stretch reads MSEQERDEVLEDDDDDEDNKSSQQERDEFVEDDDNNSIQSSPSCAQPLLTQYHDDG. A compositionally biased stretch (acidic residues) spans 20 to 33; that stretch reads ERDEVLEDDDDDED.

This is an uncharacterized protein from Dictyostelium discoideum (Social amoeba).